The sequence spans 378 residues: Ribosomal RNA large subunit methyltransferase G (378 aa).

Belongs to the methyltransferase superfamily. RlmG family.

Its subcellular location is the cytoplasm. It catalyses the reaction guanosine(1835) in 23S rRNA + S-adenosyl-L-methionine = N(2)-methylguanosine(1835) in 23S rRNA + S-adenosyl-L-homocysteine + H(+). Functionally, specifically methylates the guanine in position 1835 (m2G1835) of 23S rRNA. The sequence is that of Ribosomal RNA large subunit methyltransferase G from Shewanella putrefaciens (strain CN-32 / ATCC BAA-453).